The sequence spans 602 residues: Aspartate--tRNA(Asp/Asn) ligase (602 aa).

E176 contributes to the L-aspartate binding site. Residues 200–203 (QQFK) are aspartate. Positions 222 and 452 each coordinate L-aspartate. An ATP-binding site is contributed by 222 to 224 (RDE). E490 contacts ATP. R497 is a binding site for L-aspartate. An ATP-binding site is contributed by 542-545 (GIDR).

The protein belongs to the class-II aminoacyl-tRNA synthetase family. Type 1 subfamily. As to quaternary structure, homodimer.

Its subcellular location is the cytoplasm. It catalyses the reaction tRNA(Asx) + L-aspartate + ATP = L-aspartyl-tRNA(Asx) + AMP + diphosphate. Functionally, aspartyl-tRNA synthetase with relaxed tRNA specificity since it is able to aspartylate not only its cognate tRNA(Asp) but also tRNA(Asn). Reaction proceeds in two steps: L-aspartate is first activated by ATP to form Asp-AMP and then transferred to the acceptor end of tRNA(Asp/Asn). The chain is Aspartate--tRNA(Asp/Asn) ligase from Rickettsia bellii (strain OSU 85-389).